Here is a 444-residue protein sequence, read N- to C-terminus: C4-dicarboxylate transport protein 2 (444 aa).

Transmembrane regions (helical) follow at residues 23–43 (ILYV…WLWP), 61–81 (LIKM…IAHI), 95–115 (LVYF…VANV), 162–182 (GEIL…MGLG), 198–218 (AMFG…FGAM), and 236–256 (LIAT…GIIA).

This sequence belongs to the dicarboxylate/amino acid:cation symporter (DAACS) (TC 2.A.23) family.

It localises to the cell inner membrane. Functionally, responsible for the transport of dicarboxylates such as succinate, fumarate, and malate from the periplasm across the membrane. The protein is C4-dicarboxylate transport protein 2 of Bradyrhizobium diazoefficiens (strain JCM 10833 / BCRC 13528 / IAM 13628 / NBRC 14792 / USDA 110).